Consider the following 343-residue polypeptide: Flavone 3'-O-methyltransferase OMT2 (343 aa).

Asparagine 107 provides a ligand contact to (E)-ferulate. Residues glycine 184, aspartate 207, aspartate 227, methionine 228, methionine 240, and lysine 241 each coordinate S-adenosyl-L-homocysteine. Histidine 245 functions as the Proton acceptor in the catalytic mechanism. Residue aspartate 246 participates in (E)-5-hydroxyferulate binding. Catalysis depends on residues glutamate 273 and glutamate 305.

It belongs to the class I-like SAM-binding methyltransferase superfamily. Cation-independent O-methyltransferase family. COMT subfamily. In terms of assembly, homodimer.

The enzyme catalyses (E)-5-hydroxyferulate + S-adenosyl-L-methionine = (E)-sinapate + S-adenosyl-L-homocysteine + H(+). It carries out the reaction luteolin + S-adenosyl-L-methionine = chrysoeriol + S-adenosyl-L-homocysteine + H(+). The catalysed reaction is quercetin + S-adenosyl-L-methionine = isorhamnetin + S-adenosyl-L-homocysteine + H(+). It catalyses the reaction (E)-caffeate + S-adenosyl-L-methionine = (E)-ferulate + S-adenosyl-L-homocysteine + H(+). The enzyme catalyses a 3'-hydroxyflavone + S-adenosyl-L-methionine = a 3'-methoxyflavone + S-adenosyl-L-homocysteine + H(+). Its pathway is flavonoid metabolism. Functionally, catalyzes the 3'-O-methylation of the flavonoids luteolin and quercetin. Catalyzes the 3- of 5-O-methylation of the phenylpropanoids caffeate and 5-hydroxyferulate. Substrate preference is 5-hydroxyferulate &gt; luteolin &gt; quercetin &gt; caffeate. Apigenin, kempferol and 3,4-dimethylquercetin do not seem to be substrates for methylation. The protein is Flavone 3'-O-methyltransferase OMT2 of Chrysosplenium americanum (American golden saxifrage).